The sequence spans 78 residues: Acyl carrier protein (78 aa).

One can recognise a Carrier domain in the interval 2–77; sequence SDIAERVKKI…DAVKFIEKAQ (76 aa). An O-(pantetheine 4'-phosphoryl)serine modification is found at Ser-37.

The protein belongs to the acyl carrier protein (ACP) family. 4'-phosphopantetheine is transferred from CoA to a specific serine of apo-ACP by AcpS. This modification is essential for activity because fatty acids are bound in thioester linkage to the sulfhydryl of the prosthetic group.

It is found in the cytoplasm. It participates in lipid metabolism; fatty acid biosynthesis. Functionally, carrier of the growing fatty acid chain in fatty acid biosynthesis. The sequence is that of Acyl carrier protein from Sinorhizobium fredii (strain NBRC 101917 / NGR234).